The primary structure comprises 333 residues: Protoheme IX farnesyltransferase (333 aa).

Helical transmembrane passes span leucine 63–isoleucine 83, alanine 109–valine 129, leucine 132–leucine 152, isoleucine 160–glycine 180, tryptophan 188–leucine 208, glycine 245–phenylalanine 265, and tryptophan 292–alanine 312.

Belongs to the UbiA prenyltransferase family. Protoheme IX farnesyltransferase subfamily.

It is found in the cell inner membrane. It carries out the reaction heme b + (2E,6E)-farnesyl diphosphate + H2O = Fe(II)-heme o + diphosphate. The protein operates within porphyrin-containing compound metabolism; heme O biosynthesis; heme O from protoheme: step 1/1. In terms of biological role, converts heme B (protoheme IX) to heme O by substitution of the vinyl group on carbon 2 of heme B porphyrin ring with a hydroxyethyl farnesyl side group. The polypeptide is Protoheme IX farnesyltransferase (Prochlorococcus marinus (strain MIT 9303)).